A 119-amino-acid chain; its full sequence is Tubulin-specific chaperone A (119 aa).

This sequence belongs to the TBCA family. As to quaternary structure, supercomplex made of cofactors A to E. Cofactors A and D function by capturing and stabilizing tubulin in a quasi-native conformation. Cofactor E binds to the cofactor D-tubulin complex; interaction with cofactor C then causes the release of tubulin polypeptides that are committed to the native state.

The protein localises to the cytoplasm. Its subcellular location is the cytoskeleton. In terms of biological role, required for the maintenance of microtubule structures and cell polarity. Beta-tubulin-folding protein; may have a regulatory role in the tubulin-folding pathway. The chain is Tubulin-specific chaperone A (alp31) from Schizosaccharomyces pombe (strain 972 / ATCC 24843) (Fission yeast).